A 129-amino-acid chain; its full sequence is Glycine cleavage system H protein (129 aa).

A Lipoyl-binding domain is found at 24–106 (SYTVGITEHA…YGEGWFFRVM (83 aa)). Lys-65 is modified (N6-lipoyllysine).

This sequence belongs to the GcvH family. In terms of assembly, the glycine cleavage system is composed of four proteins: P, T, L and H. The cofactor is (R)-lipoate.

Functionally, the glycine cleavage system catalyzes the degradation of glycine. The H protein shuttles the methylamine group of glycine from the P protein to the T protein. This is Glycine cleavage system H protein from Shewanella oneidensis (strain ATCC 700550 / JCM 31522 / CIP 106686 / LMG 19005 / NCIMB 14063 / MR-1).